The following is a 190-amino-acid chain: Selenoprotein S (190 aa).

A helical transmembrane segment spans residues 28–48 (SLLASYGWYILFSCILLYIVI). Residues 78–90 (RQEALAAARLRMQ) form a VCP/p97-interacting motif (VIM) region. The interval 115 to 190 (KIEMWDSMQE…RRGPSSGGUN (76 aa)) is disordered. The span at 160–174 (RGGGYNPLTGEGGGT) shows a compositional bias: gly residues. Residue Sec189 is a non-standard amino acid, selenocysteine.

Belongs to the selenoprotein S family. Interacts with DERL1 and (via VIM motif) with VCP, suggesting that it forms a membrane complex with DERL1 that serves as a receptor for VCP. Also interacts with DERL2, DERL3 and SELENOK. The SELENOK-SELENOS complex interacts with VCP. Interacts with CCDC47. Truncated SELENOS proteins produced by failed UGA/Sec decoding are ubiquitinated by the CRL2(KLHDC2) and CRL2(KLHDC3) complexes, which recognizes the glycine (Gly) at the C-terminus of truncated SELENOS proteins. Truncated SELENOS proteins produced by failed UGA/Sec decoding are also ubiquitinated by the CRL5(KLHDC1) complex.

The protein resides in the endoplasmic reticulum membrane. Its subcellular location is the cytoplasm. Involved in the degradation process of misfolded endoplasmic reticulum (ER) luminal proteins. Participates in the transfer of misfolded proteins from the ER to the cytosol, where they are destroyed by the proteasome in a ubiquitin-dependent manner. Probably acts by serving as a linker between DERL1, which mediates the retrotranslocation of misfolded proteins into the cytosol, and the ATPase complex VCP, which mediates the translocation and ubiquitination. This is Selenoprotein S from Mus musculus (Mouse).